A 570-amino-acid polypeptide reads, in one-letter code: MLTDMDISRRAHLKDIAALGAEFGLLPDEMQLFGKTKAKVDLRAQQRLAEQQQGKLIIVTAVTPTPHGEGKTVTTIGLTQSLKALGNKVCACIRQPSMGPVFGVKGGAAGGGYAQVVPMQELNLHLTGDIHAVSSAHNLGAAAIASRLYHETRLGKAEFESQSGQNYLDIAPNGIRWHRVVDHNDRCLREIEVGLGENNGPAYTSGFDITAASELMAILALSRNLADMRARIGKLVLAVNRQGAAISAEDLGVAGAMTAIMADAVKPTLMQTLNGAPCLIHAGPFANIAHGNSSVIADDIALKLADFVVTEGGFGSDMGFEKFCNIKARQSGLAPSAAVLVTTLKALKANSGLTSDADINAPDQARLEAGFANLNWHINNVARYGIPVVVAINRFATDTDAELNWLIEAVAGTAAFGCELSEAFSQGEAGALTLAQTVMRACEQPSEFTLLYPDEMALEAKLSTLAEVGYGATGVSLSEAAKLQLQELSALGYADLPVCMAKTPLSISHDPQLKGVPQGFIVPVRELVLNAGAGFITALVGNVMTMPGLGLVPGYLKVDIGADGEITGLG.

65 to 72 (TPHGEGKT) is an ATP binding site.

It belongs to the formate--tetrahydrofolate ligase family.

The enzyme catalyses (6S)-5,6,7,8-tetrahydrofolate + formate + ATP = (6R)-10-formyltetrahydrofolate + ADP + phosphate. It participates in one-carbon metabolism; tetrahydrofolate interconversion. This is Formate--tetrahydrofolate ligase from Shewanella sp. (strain ANA-3).